The chain runs to 106 residues: Large ribosomal subunit protein uL24 (106 aa).

This sequence belongs to the universal ribosomal protein uL24 family. As to quaternary structure, part of the 50S ribosomal subunit.

Functionally, one of two assembly initiator proteins, it binds directly to the 5'-end of the 23S rRNA, where it nucleates assembly of the 50S subunit. Its function is as follows. One of the proteins that surrounds the polypeptide exit tunnel on the outside of the subunit. The chain is Large ribosomal subunit protein uL24 from Desulforamulus reducens (strain ATCC BAA-1160 / DSM 100696 / MI-1) (Desulfotomaculum reducens).